Consider the following 299-residue polypeptide: Exosome complex component rrp42 (299 aa).

Belongs to the RNase PH family. As to quaternary structure, component of the RNA exosome complex. Specifically part of the catalytically inactive RNA exosome core complex (Exo-9) which may associate with the catalytic subunits rrp6 and dis3 in cytoplasmic- and nuclear-specific RNA exosome complex forms. Exo-9 is formed by a hexameric base ring of RNase PH domain-containing subunits and a cap ring consisting of csl4, rrp4 and rrp40.

The protein localises to the cytoplasm. It localises to the nucleus. Its subcellular location is the nucleolus. In terms of biological role, non-catalytic component of the RNA exosome complex which has 3'-&gt;5' exoribonuclease activity and participates in a multitude of cellular RNA processing and degradation events. In the nucleus, the RNA exosome complex is involved in proper maturation of stable RNA species such as rRNA, snRNA and snoRNA, in the elimination of RNA processing by-products and non-coding 'pervasive' transcripts, such as antisense RNA species and cryptic unstable transcripts (CUTs), and of mRNAs with processing defects, thereby limiting or excluding their export to the cytoplasm. In the cytoplasm, the RNA exosome complex is involved in general mRNA turnover and in RNA surveillance pathways, preventing translation of aberrant mRNAs. The catalytic inactive RNA exosome core complex of 9 subunits (Exo-9) is proposed to play a pivotal role in the binding and presentation of RNA for ribonucleolysis, and to serve as a scaffold for the association with catalytic subunits and accessory proteins or complexes. ski6 is part of the hexameric ring of RNase PH domain-containing subunits proposed to form a central channel which threads RNA substrates for degradation. This is Exosome complex component rrp42 (rrp42) from Schizosaccharomyces pombe (strain 972 / ATCC 24843) (Fission yeast).